The chain runs to 707 residues: Serine/threonine protein kinase UL97 (707 aa).

Positions 1 to 14 are enriched in low complexity; that stretch reads MSSALRSRARSASL. Disordered regions lie at residues 1–33, 113–146, 176–198, and 231–264; these read MSSA…SRAR, DGEK…GDGY, FTGG…RPLR, and ESQD…EADS. Residues 113–127 are compositionally biased toward basic and acidic residues; the sequence is DGEKEDAASDKENLR. The segment covering 178–188 has biased composition (low complexity); it reads GGSDPSDSVSG. Residues 337–345 and Lys-359 each bind ATP; that span reads LGQGSFGEV. The active-site Proton acceptor is Asp-456.

It belongs to the protein kinase superfamily. Tyr protein kinase family. HCMV ganciclovir subfamily. In terms of assembly, interacts with UL83. In terms of processing, autophosphorylates on serine and threonine residues.

It is found in the virion. The enzyme catalyses L-seryl-[protein] + ATP = O-phospho-L-seryl-[protein] + ADP + H(+). It carries out the reaction L-threonyl-[protein] + ATP = O-phospho-L-threonyl-[protein] + ADP + H(+). Functionally, serine/threonine protein kinase that plays important roles in several processes including nuclear viral egress, viral replication or regulation of host cell cycle progression. Participates in the acquisition of tegument during virion morphogenesis in the nucleus. Phosphorylates the viral nuclear egress complex (NEC) subunits UL50 and UL53. Redistributes the host nuclear lamina by phosphorylating cellular Lamins-A/C. Plays a role in viral DNA synthesis by phosphorylating the DNA polymerase processivity factor UL44. Stimulates host cell cycle to support viral DNA synthesis by phosphorylating host retinoblastoma/RB1 protein. Additional substrates have been identified including host EF1D or H2B. Also phosphorylates host SAMHD1 and thereby counteracts its antiviral effect by reducing its dNTP hydrolase activity. This is Serine/threonine protein kinase UL97 (UL97) from Human cytomegalovirus (strain AD169) (HHV-5).